The primary structure comprises 274 residues: Ribosomal RNA small subunit methyltransferase A (274 aa).

Residues histidine 15, leucine 17, glycine 42, glutamate 64, aspartate 89, and asparagine 109 each contribute to the S-adenosyl-L-methionine site.

It belongs to the class I-like SAM-binding methyltransferase superfamily. rRNA adenine N(6)-methyltransferase family. RsmA subfamily.

The protein localises to the cytoplasm. The enzyme catalyses adenosine(1518)/adenosine(1519) in 16S rRNA + 4 S-adenosyl-L-methionine = N(6)-dimethyladenosine(1518)/N(6)-dimethyladenosine(1519) in 16S rRNA + 4 S-adenosyl-L-homocysteine + 4 H(+). Specifically dimethylates two adjacent adenosines (A1518 and A1519) in the loop of a conserved hairpin near the 3'-end of 16S rRNA in the 30S particle. May play a critical role in biogenesis of 30S subunits. This is Ribosomal RNA small subunit methyltransferase A from Synechococcus sp. (strain CC9605).